The following is a 704-amino-acid chain: Elongation factor G (704 aa).

In terms of domain architecture, tr-type G spans 8 to 291 (DKVRNIGIMA…TVVECLPSPV (284 aa)). GTP contacts are provided by residues 17-24 (AHIDAGKT), 90-94 (DTPGH), and 144-147 (NKMD).

The protein belongs to the TRAFAC class translation factor GTPase superfamily. Classic translation factor GTPase family. EF-G/EF-2 subfamily.

The protein resides in the cytoplasm. Functionally, catalyzes the GTP-dependent ribosomal translocation step during translation elongation. During this step, the ribosome changes from the pre-translocational (PRE) to the post-translocational (POST) state as the newly formed A-site-bound peptidyl-tRNA and P-site-bound deacylated tRNA move to the P and E sites, respectively. Catalyzes the coordinated movement of the two tRNA molecules, the mRNA and conformational changes in the ribosome. The sequence is that of Elongation factor G from Prosthecochloris aestuarii (strain DSM 271 / SK 413).